The primary structure comprises 435 residues: Putrescine transporter PotE (435 aa).

12 helical membrane passes run 8–28, 39–59, 95–115, 117–137, 148–168, 185–205, 224–244, 275–295, 320–340, 354–374, 386–406, and 409–429; these read IGVV…GIIM, ISIV…YAFA, LVIA…ELFG, ILSP…ATVL, ISSF…IIGW, VPTF…FLGL, IAVL…TNVI, VIMG…QFTI, APVV…LMTI, LAVV…AVLL, TTVF…YAAG, and AMLY…FVSY.

The protein belongs to the amino acid-polyamine-organocation (APC) superfamily. Basic amino acid/polyamine antiporter (APA) (TC 2.A.3.2) family.

It is found in the cell inner membrane. It catalyses the reaction putrescine(in) + H(+)(in) = putrescine(out) + H(+)(out). It carries out the reaction putrescine(in) + L-ornithine(out) = putrescine(out) + L-ornithine(in). Its function is as follows. Catalyzes both the uptake and excretion of putrescine. The uptake of putrescine is dependent on the membrane potential and the excretion involves putrescine-ornithine antiporter activity. This is Putrescine transporter PotE from Haemophilus influenzae (strain ATCC 51907 / DSM 11121 / KW20 / Rd).